A 717-amino-acid chain; its full sequence is uncharacterized protein (717 aa).

Belongs to the asfivirus C717R family.

The protein localises to the virion. This is an uncharacterized protein from African swine fever virus (isolate Tick/Malawi/Lil 20-1/1983) (ASFV).